The chain runs to 911 residues: Protein translocase subunit SecA (911 aa).

Residues glutamine 86, 104–108, and aspartate 512 contribute to the ATP site; that span reads GEGKT. Positions 895, 897, 906, and 907 each coordinate Zn(2+).

Belongs to the SecA family. In terms of assembly, monomer and homodimer. Part of the essential Sec protein translocation apparatus which comprises SecA, SecYEG and auxiliary proteins SecDF-YajC and YidC. It depends on Zn(2+) as a cofactor.

The protein resides in the cell inner membrane. The protein localises to the cytoplasm. It catalyses the reaction ATP + H2O + cellular proteinSide 1 = ADP + phosphate + cellular proteinSide 2.. In terms of biological role, part of the Sec protein translocase complex. Interacts with the SecYEG preprotein conducting channel. Has a central role in coupling the hydrolysis of ATP to the transfer of proteins into and across the cell membrane, serving both as a receptor for the preprotein-SecB complex and as an ATP-driven molecular motor driving the stepwise translocation of polypeptide chains across the membrane. This chain is Protein translocase subunit SecA, found in Bordetella bronchiseptica (strain ATCC BAA-588 / NCTC 13252 / RB50) (Alcaligenes bronchisepticus).